Here is a 238-residue protein sequence, read N- to C-terminus: UPF0173 metal-dependent hydrolase Helmi_16730 (238 aa).

The protein belongs to the UPF0173 family.

This is UPF0173 metal-dependent hydrolase Helmi_16730 from Heliobacterium modesticaldum (strain ATCC 51547 / Ice1).